Here is a 227-residue protein sequence, read N- to C-terminus: Ribose-5-phosphate isomerase A (227 aa).

Residues 26–29 (TGST), 82–85 (DGAD), and 95–98 (KGGG) contribute to the substrate site. The active-site Proton acceptor is E104. A substrate-binding site is contributed by K122.

The protein belongs to the ribose 5-phosphate isomerase family. Homodimer.

It carries out the reaction aldehydo-D-ribose 5-phosphate = D-ribulose 5-phosphate. The protein operates within carbohydrate degradation; pentose phosphate pathway; D-ribose 5-phosphate from D-ribulose 5-phosphate (non-oxidative stage): step 1/1. In terms of biological role, catalyzes the reversible conversion of ribose-5-phosphate to ribulose 5-phosphate. The sequence is that of Ribose-5-phosphate isomerase A from Streptococcus pneumoniae serotype 4 (strain ATCC BAA-334 / TIGR4).